The sequence spans 215 residues: Probable GTP-binding protein EngB (215 aa).

One can recognise an EngB-type G domain in the interval 30 to 204; sequence EGLEVAFAGR…QMVLAQWLGL (175 aa). Residues 38–45, 64–68, 82–85, 149–152, and 182–185 each bind GTP; these read GRSNAGKS, GRTQL, DLPG, TKAD, and LFSA. S45 and T66 together coordinate Mg(2+).

This sequence belongs to the TRAFAC class TrmE-Era-EngA-EngB-Septin-like GTPase superfamily. EngB GTPase family. Mg(2+) serves as cofactor.

Functionally, necessary for normal cell division and for the maintenance of normal septation. This is Probable GTP-binding protein EngB from Pseudomonas paraeruginosa (strain DSM 24068 / PA7) (Pseudomonas aeruginosa (strain PA7)).